Reading from the N-terminus, the 321-residue chain is Ferredoxin--NADP reductase (321 aa).

Residues D28, Q36, Y41, A81, F115, D274, and S315 each contribute to the FAD site.

This sequence belongs to the ferredoxin--NADP reductase type 2 family. Homodimer. FAD serves as cofactor.

It catalyses the reaction 2 reduced [2Fe-2S]-[ferredoxin] + NADP(+) + H(+) = 2 oxidized [2Fe-2S]-[ferredoxin] + NADPH. The polypeptide is Ferredoxin--NADP reductase (Frankia casuarinae (strain DSM 45818 / CECT 9043 / HFP020203 / CcI3)).